A 1163-amino-acid chain; its full sequence is Rho GTPase-activating protein 45 (1163 aa).

The tract at residues 1-99 is disordered; that stretch reads MFSRKKRELM…KRPTSLSRHA (99 aa). Phosphoserine is present on residues S23 and S25. Residues 55 to 65 are compositionally biased toward basic and acidic residues; that stretch reads LPKELPRKDGA. S100, S120, and S126 each carry phosphoserine. Disordered regions lie at residues 118–137, 262–282, and 454–475; these read HRSP…GTGP, PPGD…EGTP, and EEEQ…LDKR. An F-BAR domain is found at 296 to 566; it reads EEVDVLLQRC…SSKLYDPGQQ (271 aa). Positions 403–526 form a coiled coil; it reads EHEKRRKEIK…QIQEVIRQSD (124 aa). The span at 458–470 shows a compositional bias: low complexity; sequence AGTAPGAGSTATK. Phosphoserine occurs at positions 596, 605, and 619. The interval 610 to 695 is disordered; the sequence is DVAGPEAAGS…VDPEGGAGAS (86 aa). Positions 633–644 are enriched in basic residues; it reads KGHRAGRGHQVH. S646 is subject to Phosphoserine. Residues 673–682 are compositionally biased toward low complexity; that stretch reads TSSSGTMSST. A Phorbol-ester/DAG-type zinc finger spans residues 729–774; the sequence is THRLRKLRTPAKCRECNSYVYFQGAECEECCLACHKKCLETLAIQC. Positions 788 to 1001 constitute a Rho-GAP domain; it reads QDFSHAARSA…TLIVHYGLVF (214 aa). Phosphoserine is present on residues S976, S1054, S1057, and S1059. 2 disordered regions span residues 1042–1067 and 1087–1163; these read AAED…ASEL and SEAS…PEFV. Low complexity predominate over residues 1087 to 1099; sequence SEASLEEASGSHS. Residues 1125–1137 are compositionally biased toward polar residues; it reads SGFNTNQSNNVLQ.

It localises to the cytoplasm. Its subcellular location is the cell projection. The protein resides in the ruffle membrane. Contains a GTPase activator for the Rho-type GTPases (RhoGAP) domain that would be able to negatively regulate the actin cytoskeleton as well as cell spreading. However, also contains N-terminally a BAR-domin which is able to play an autoinhibitory effect on this RhoGAP activity. The polypeptide is Rho GTPase-activating protein 45 (Pongo abelii (Sumatran orangutan)).